The following is a 335-amino-acid chain: Ornithine carbamoyltransferase (335 aa).

Carbamoyl phosphate contacts are provided by residues 56–59 (STRT), Gln-83, Arg-107, and 134–137 (HPTQ). L-ornithine-binding positions include Asn-168, Asp-232, and 236-237 (SM). Carbamoyl phosphate is bound by residues 274 to 275 (CL) and Arg-320.

The protein belongs to the aspartate/ornithine carbamoyltransferase superfamily. OTCase family.

Its subcellular location is the cytoplasm. It carries out the reaction carbamoyl phosphate + L-ornithine = L-citrulline + phosphate + H(+). It functions in the pathway amino-acid biosynthesis; L-arginine biosynthesis; L-arginine from L-ornithine and carbamoyl phosphate: step 1/3. Its function is as follows. Reversibly catalyzes the transfer of the carbamoyl group from carbamoyl phosphate (CP) to the N(epsilon) atom of ornithine (ORN) to produce L-citrulline. In Yersinia pseudotuberculosis serotype I (strain IP32953), this protein is Ornithine carbamoyltransferase.